The chain runs to 210 residues: Secreted isochorismatase effector Isc1 (210 aa).

Catalysis depends on residues Asp-25, Lys-90, and Cys-124.

The protein belongs to the isochorismatase family.

Its subcellular location is the secreted. The protein resides in the host cytoplasm. The protein localises to the host nucleus. The enzyme catalyses isochorismate + H2O = (2S,3S)-2,3-dihydroxy-2,3-dihydrobenzoate + pyruvate. Its function is as follows. Secreted isochorismatase required for full virulence of P.sojae. Suppresses salicylate-mediated innate immunity of the host by disrupting the plant salicylate metabolism pathway via hydrolysis of its isochorismate precursor. In Phytophthora sojae (strain P6497) (Soybean stem and root rot agent), this protein is Secreted isochorismatase effector Isc1.